The sequence spans 504 residues: Catalase (504 aa).

Positions M1–A21 are cleaved as a signal peptide. Active-site residues include H72 and N145. Y353 provides a ligand contact to heme.

It belongs to the catalase family. It depends on heme as a cofactor.

The protein resides in the periplasm. The catalysed reaction is 2 H2O2 = O2 + 2 H2O. Its function is as follows. Decomposes hydrogen peroxide into water and oxygen; serves to protect cells from the toxic effects of hydrogen peroxide. This chain is Catalase, found in Vibrio parahaemolyticus serotype O3:K6 (strain RIMD 2210633).